The sequence spans 507 residues: Histidine ammonia-lyase (507 aa).

The segment at residues A141–G143 is a cross-link (5-imidazolinone (Ala-Gly)). S142 is modified (2,3-didehydroalanine (Ser)).

This sequence belongs to the PAL/histidase family. In terms of processing, contains an active site 4-methylidene-imidazol-5-one (MIO), which is formed autocatalytically by cyclization and dehydration of residues Ala-Ser-Gly.

It localises to the cytoplasm. The enzyme catalyses L-histidine = trans-urocanate + NH4(+). The protein operates within amino-acid degradation; L-histidine degradation into L-glutamate; N-formimidoyl-L-glutamate from L-histidine: step 1/3. This Natranaerobius thermophilus (strain ATCC BAA-1301 / DSM 18059 / JW/NM-WN-LF) protein is Histidine ammonia-lyase.